We begin with the raw amino-acid sequence, 107 residues long: Growth-regulated alpha protein (107 aa).

The N-terminal stretch at 1–34 is a signal peptide; that stretch reads MARAALSAAPSNPRLLRVALLLLLLVAAGRRAAG. 2 cysteine pairs are disulfide-bonded: Cys-43–Cys-69 and Cys-45–Cys-85.

Belongs to the intercrine alpha (chemokine CxC) family. In terms of processing, N-terminal processed forms GRO-alpha(4-73), GRO-alpha(5-73) and GRO-alpha(6-73) are produced by proteolytic cleavage after secretion from peripheral blood monocytes.

It localises to the secreted. Its function is as follows. Has chemotactic activity for neutrophils. May play a role in inflammation and exerts its effects on endothelial cells in an autocrine fashion. In vitro, the processed forms GRO-alpha(4-73), GRO-alpha(5-73) and GRO-alpha(6-73) show a 30-fold higher chemotactic activity. The protein is Growth-regulated alpha protein (CXCL1) of Homo sapiens (Human).